The following is a 471-amino-acid chain: ATP synthase subunit beta (471 aa).

Gly156–Thr163 contacts ATP.

Belongs to the ATPase alpha/beta chains family. F-type ATPases have 2 components, CF(1) - the catalytic core - and CF(0) - the membrane proton channel. CF(1) has five subunits: alpha(3), beta(3), gamma(1), delta(1), epsilon(1). CF(0) has three main subunits: a(1), b(2) and c(9-12). The alpha and beta chains form an alternating ring which encloses part of the gamma chain. CF(1) is attached to CF(0) by a central stalk formed by the gamma and epsilon chains, while a peripheral stalk is formed by the delta and b chains.

It is found in the cell membrane. The enzyme catalyses ATP + H2O + 4 H(+)(in) = ADP + phosphate + 5 H(+)(out). Produces ATP from ADP in the presence of a proton gradient across the membrane. The catalytic sites are hosted primarily by the beta subunits. The protein is ATP synthase subunit beta of Lysinibacillus sphaericus (strain C3-41).